Here is a 149-residue protein sequence, read N- to C-terminus: Alpha-crystallin A chain (149 aa).

The sHSP domain maps to 41 to 149 (LFRSVLESGI…DPTHSERPIP (109 aa)). Zn(2+) is bound by residues His-89, Glu-91, His-96, and His-143.

Belongs to the small heat shock protein (HSP20) family. Heteropolymer composed of three CRYAA and one CRYAB subunits. Inter-subunit bridging via zinc ions enhances stability, which is crucial as there is no protein turn over in the lens. Can also form homodimers and homotetramers (dimers of dimers) which serve as the building blocks of homooligomers. Within homooligomers, the zinc-binding motif is created from residues of 3 different molecules. His-89 and Glu-91 from one molecule are ligands of the zinc ion, and His-96 and His-143 residues from additional molecules complete the site with tetrahedral coordination geometry.

Its subcellular location is the cytoplasm. The protein localises to the nucleus. Functionally, contributes to the transparency and refractive index of the lens. May act as a chaperone, preventing aggregation of various proteins under a wide range of stress conditions. This is Alpha-crystallin A chain (CRYAA) from Anas platyrhynchos (Mallard).